Reading from the N-terminus, the 74-residue chain is Cecropin-P2 (74 aa).

Residues 1–13 (MIFIYLLVQTAES) form the signal peptide. The propeptide at 45 to 74 (RRRFVVQQDTISPRLEVDERFLPNSVQEQI) is removed in mature form.

It belongs to the cecropin family. Expressed in the body wall, intestine, uterus and ovary.

Its subcellular location is the secreted. In terms of biological role, has antibacterial activity against several Gram-positive and Gram-negative bacteria. Is weakly active against yeasts. Acts by a nonpore mechanism. This is Cecropin-P2 (ASCEC-2) from Ascaris suum (Pig roundworm).